The following is a 137-amino-acid chain: Peptide methionine sulfoxide reductase MsrB (137 aa).

Residues 9-131 (DAEWRAMLDD…NSASLRFDAT (123 aa)) enclose the MsrB domain. Zn(2+)-binding residues include cysteine 48, cysteine 51, cysteine 97, and cysteine 100. Cysteine 120 acts as the Nucleophile in catalysis.

This sequence belongs to the MsrB Met sulfoxide reductase family. Requires Zn(2+) as cofactor.

It catalyses the reaction L-methionyl-[protein] + [thioredoxin]-disulfide + H2O = L-methionyl-(R)-S-oxide-[protein] + [thioredoxin]-dithiol. The protein is Peptide methionine sulfoxide reductase MsrB of Herminiimonas arsenicoxydans.